Consider the following 730-residue polypeptide: Translation initiation factor IF-2 (730 aa).

The interval 48 to 151 is disordered; that stretch reads GNGNQKQGGS…NKAKPLPEKV (104 aa). Composition is skewed to basic and acidic residues over residues 61-77 and 89-104; these read EQQK…DHGQ and NQHD…KGKA. A compositionally biased stretch (basic residues) spans 110-123; it reads KPKHKGNKNKKQHQ. A compositionally biased stretch (basic and acidic residues) spans 137–148; sequence RQPEMNKAKPLP. One can recognise a tr-type G domain in the interval 231-400; that stretch reads ERPPVVTIMG…LLVAEVEELK (170 aa). The tract at residues 240–247 is G1; that stretch reads GHVDHGKT. GTP is bound at residue 240-247; that stretch reads GHVDHGKT. Positions 265 to 269 are G2; the sequence is GITQH. The interval 286–289 is G3; it reads DTPG. Residues 286–290 and 340–343 contribute to the GTP site; these read DTPGH and NKMD. The interval 340-343 is G4; the sequence is NKMD. The tract at residues 376–378 is G5; sequence SAL.

It belongs to the TRAFAC class translation factor GTPase superfamily. Classic translation factor GTPase family. IF-2 subfamily.

It localises to the cytoplasm. Functionally, one of the essential components for the initiation of protein synthesis. Protects formylmethionyl-tRNA from spontaneous hydrolysis and promotes its binding to the 30S ribosomal subunits. Also involved in the hydrolysis of GTP during the formation of the 70S ribosomal complex. This is Translation initiation factor IF-2 from Halalkalibacterium halodurans (strain ATCC BAA-125 / DSM 18197 / FERM 7344 / JCM 9153 / C-125) (Bacillus halodurans).